We begin with the raw amino-acid sequence, 935 residues long: ATP-dependent RNA helicase dbp10 (935 aa).

The interval 1 to 51 (MAPRAASPALSENEFDITGALFQNDSESDNERSSAKSKRQPKKKIPSQDLD) is disordered. A compositionally biased stretch (basic residues) spans 35 to 45 (AKSKRQPKKKI). The short motif at 89–117 (GGFQAMGLSANLLKAIARKGFSVPTPIQR) is the Q motif element. Residues 120–292 (IPVIMDDQDV…RAGLQEPTLI (173 aa)) form the Helicase ATP-binding domain. An ATP-binding site is contributed by 133–140 (ARTGSGKT). The DEAD box signature appears at 240-243 (DEAD). One can recognise a Helicase C-terminal domain in the interval 360–514 (EMEKAVNTKE…HVNFAEDVVA (155 aa)). Disordered regions lie at residues 638 to 674 (LETK…NEDE) and 857 to 935 (SGKR…SRKR). Basic and acidic residues-rich tracts occupy residues 662–673 (KTGEGEAGKNED), 866–881 (EQAP…DYEK), and 906–916 (SELRNTDDIRI).

It belongs to the DEAD box helicase family. DDX54/DBP10 subfamily.

The protein localises to the nucleus. Its subcellular location is the nucleolus. The catalysed reaction is ATP + H2O = ADP + phosphate + H(+). In terms of biological role, ATP-binding RNA helicase involved in the biogenesis of 60S ribosomal subunits and is required for the normal formation of 25S and 5.8S rRNAs. The chain is ATP-dependent RNA helicase dbp10 (dbp10) from Aspergillus clavatus (strain ATCC 1007 / CBS 513.65 / DSM 816 / NCTC 3887 / NRRL 1 / QM 1276 / 107).